The following is a 417-amino-acid chain: Gelsolin (417 aa).

The Gelsolin-like 4 repeat unit spans residues 93–171 (KVPVLESHYG…VVQGKEPAHL (79 aa)). Gly-107, Asp-108, Glu-138, Asp-150, Gly-155, Pro-157, Thr-187, Asn-227, Asp-228, Glu-250, Asp-331, Asp-332, and Glu-354 together coordinate Ca(2+). 2 Gelsolin-like repeats span residues 213 to 261 (RAVE…LKIL) and 316 to 392 (IEEV…PTFI).

It belongs to the villin/gelsolin family.

The protein resides in the cytoplasm. The protein localises to the cytoskeleton. Its function is as follows. Calcium-regulated, actin-modulating protein that binds to the plus (or barbed) ends of actin monomers or filaments, preventing monomer exchange (end-blocking or capping). It can promote the assembly of monomers into filaments (nucleation) as well as sever filaments already formed. Plays a role in ciliogenesis. The polypeptide is Gelsolin (gsn) (Xenopus laevis (African clawed frog)).